The sequence spans 98 residues: uncharacterized protein (98 aa).

This sequence belongs to the CFAP97 family.

This is an uncharacterized protein from Homo sapiens (Human).